Consider the following 525-residue polypeptide: DNA damage-binding protein cmr1 (525 aa).

Residues 34-50 show a composition bias toward polar residues; it reads TGVFTSNMPRGTSANQS. Disordered stretches follow at residues 34-103, 214-240, and 282-301; these read TGVF…ERAK, DASQEKPTSAVKNEDDEDDEDDDDPDP, and TSSVEKYAPESTSDDVPISG. Basic and acidic residues predominate over residues 83–102; it reads EIAKRKADEEYDRRQEEERA. Residues 182-223 form a WD 1 repeat; the sequence is ITPERIYSMTFHPSEAKPVIFAGDKMGHLGILDASQEKPTSA. Residues 227 to 239 show a composition bias toward acidic residues; sequence EDDEDDEDDDDPD. WD repeat units follow at residues 247–287, 339–379, 384–425, 448–491, and 494–525; these read PHTR…SVEK, LSEK…HTDP, EHQS…SSWK, GRWV…LAQL, and DGITAVPAVAVFHRSKNWVAGGTASGKICLWM.

It belongs to the WD repeat DDB2/WDR76 family.

Its function is as follows. DNA-binding protein that binds to both single- and double-stranded DNA. Binds preferentially to UV-damaged DNA. May be involved in DNA-metabolic processes. In Emericella nidulans (strain FGSC A4 / ATCC 38163 / CBS 112.46 / NRRL 194 / M139) (Aspergillus nidulans), this protein is DNA damage-binding protein cmr1.